The sequence spans 671 residues: E3 ubiquitin-protein ligase pub2 (671 aa).

A C2 domain is found at 1–112 (MENIRFEVQL…KDDYKTRITL (112 aa)). Residues 242-275 (GPLPAGWEMRLSEDYHVYFVDHSTKTTTWSDPRD) form the WW domain. Positions 338-671 (SVSDMKKKLL…IQETAGFGTE (334 aa)) constitute an HECT domain. Cys639 serves as the catalytic Glycyl thioester intermediate.

Interacts with the E2 ubiquitin-conjugating enzyme ubc4.

The protein resides in the membrane. It localises to the cytoplasm. It catalyses the reaction S-ubiquitinyl-[E2 ubiquitin-conjugating enzyme]-L-cysteine + [acceptor protein]-L-lysine = [E2 ubiquitin-conjugating enzyme]-L-cysteine + N(6)-ubiquitinyl-[acceptor protein]-L-lysine.. The protein operates within protein modification; protein ubiquitination. Functionally, E3 ubiquitin-protein ligase which accepts ubiquitin from an E2 ubiquitin-conjugating enzyme in the form of a thioester and then directly transfers the ubiquitin to targeted substrates. The chain is E3 ubiquitin-protein ligase pub2 (pub2) from Schizosaccharomyces pombe (strain 972 / ATCC 24843) (Fission yeast).